The chain runs to 220 residues: Glutamine amidotransferase-like class 1 domain-containing protein 1 (220 aa).

An N-terminal signal peptide occupies residues 1-35 (MASERLPSRPACLLVASGAAEGVSAQSFLHCFTLA). N-linked (GlcNAc...) asparagine glycans are attached at residues Asn57 and Asn201.

The protein belongs to the peptidase C56 family. In terms of assembly, homotetramer. Component of the FERRY complex composed of five subunits, TBCK, PPP1R21, FERRY3, CRYZL1 and GATD1 with a ratio of 1:2:1:2:4, respectively.

Its subcellular location is the secreted. It localises to the early endosome. Functionally, component of the FERRY complex (Five-subunit Endosomal Rab5 and RNA/ribosome intermediary). The FERRY complex directly interacts with mRNAs and RAB5A, and functions as a RAB5A effector involved in the localization and the distribution of specific mRNAs most likely by mediating their endosomal transport. The complex recruits mRNAs and ribosomes to early endosomes through direct mRNA-interaction. In Bos taurus (Bovine), this protein is Glutamine amidotransferase-like class 1 domain-containing protein 1.